A 668-amino-acid chain; its full sequence is UvrABC system protein B (668 aa).

Positions 31–416 (QGITDGVPAQ…RGHIIEQIIR (386 aa)) constitute a Helicase ATP-binding domain. Residue 44 to 51 (GTTGSGKT) coordinates ATP. The Beta-hairpin signature appears at 97-120 (YYDYYQPEAYIARSDTYIEKSLLI). In terms of domain architecture, Helicase C-terminal spans 433–596 (QIDDLLEEIR…ITPQPIIKPI (164 aa)). The UVR domain maps to 621-656 (EASIKTYEEAMYQAAQEFQFDEAAKYRDLMNAAKKQ).

Belongs to the UvrB family. In terms of assembly, forms a heterotetramer with UvrA during the search for lesions. Interacts with UvrC in an incision complex.

The protein localises to the cytoplasm. In terms of biological role, the UvrABC repair system catalyzes the recognition and processing of DNA lesions. A damage recognition complex composed of 2 UvrA and 2 UvrB subunits scans DNA for abnormalities. Upon binding of the UvrA(2)B(2) complex to a putative damaged site, the DNA wraps around one UvrB monomer. DNA wrap is dependent on ATP binding by UvrB and probably causes local melting of the DNA helix, facilitating insertion of UvrB beta-hairpin between the DNA strands. Then UvrB probes one DNA strand for the presence of a lesion. If a lesion is found the UvrA subunits dissociate and the UvrB-DNA preincision complex is formed. This complex is subsequently bound by UvrC and the second UvrB is released. If no lesion is found, the DNA wraps around the other UvrB subunit that will check the other stand for damage. The polypeptide is UvrABC system protein B (Chlamydia trachomatis serovar D (strain ATCC VR-885 / DSM 19411 / UW-3/Cx)).